Here is a 210-residue protein sequence, read N- to C-terminus: Scoloptoxin SSD552 (210 aa).

The first 23 residues, 1-23, serve as a signal peptide directing secretion; that stretch reads MNILLSSTLFVLLMFQIIGSGMG.

Contains 3 disulfide bonds. In terms of tissue distribution, expressed by the venom gland.

The protein localises to the secreted. In Scolopendra dehaani (Thai centipede), this protein is Scoloptoxin SSD552.